The sequence spans 953 residues: Isoleucine--tRNA ligase (953 aa).

Positions 57–67 (PYANGDIHIGH) match the 'HIGH' region motif. E582 serves as a coordination point for L-isoleucyl-5'-AMP. Positions 623–627 (KMSKS) match the 'KMSKS' region motif. K626 contributes to the ATP binding site. 4 residues coordinate Zn(2+): C916, C919, C936, and C939.

It belongs to the class-I aminoacyl-tRNA synthetase family. IleS type 1 subfamily. In terms of assembly, monomer. Zn(2+) serves as cofactor.

Its subcellular location is the cytoplasm. It catalyses the reaction tRNA(Ile) + L-isoleucine + ATP = L-isoleucyl-tRNA(Ile) + AMP + diphosphate. Its function is as follows. Catalyzes the attachment of isoleucine to tRNA(Ile). As IleRS can inadvertently accommodate and process structurally similar amino acids such as valine, to avoid such errors it has two additional distinct tRNA(Ile)-dependent editing activities. One activity is designated as 'pretransfer' editing and involves the hydrolysis of activated Val-AMP. The other activity is designated 'posttransfer' editing and involves deacylation of mischarged Val-tRNA(Ile). This Bordetella petrii (strain ATCC BAA-461 / DSM 12804 / CCUG 43448) protein is Isoleucine--tRNA ligase.